The primary structure comprises 277 residues: SPX domain-containing protein 3 (277 aa).

Residues 1–152 (MKFGKRLKKQ…GRLLRLPFIE (152 aa)) enclose the SPX domain.

This Oryza sativa subsp. indica (Rice) protein is SPX domain-containing protein 3 (SPX3).